A 77-amino-acid chain; its full sequence is U8-lycotoxin-Ls1h (77 aa).

A signal peptide spans 1 to 20 (MKLIIFTGLVLFAIVSLIEV). A propeptide spanning residues 21–26 (QADNER) is cleaved from the precursor.

Belongs to the neurotoxin 19 (CSTX) family. 08 (U8-Lctx) subfamily. Contains 4 disulfide bonds. As to expression, expressed by the venom gland.

The protein localises to the secreted. The polypeptide is U8-lycotoxin-Ls1h (Lycosa singoriensis (Wolf spider)).